Reading from the N-terminus, the 1488-residue chain is Chromosome partition protein MukB (1488 aa).

Position 34–41 (34–41 (GGNGAGKS)) interacts with ATP. Coiled coils occupy residues 326 to 418 (LEAD…QYNQ), 444 to 472 (LDTF…QTAH), and 509 to 602 (RHLA…QRAP). A flexible hinge region spans residues 666-783 (PGGAEDQRLN…SLPIFGRAAR (118 aa)). Coiled coils occupy residues 835–923 (EAEI…AKLE), 977–1116 (EMLS…AKAG), and 1209–1265 (VEAI…LQSV). Residues 1049–1074 (ADSGAEERARQRRDELHAQLSNNRSR) form a disordered region. Over residues 1051–1065 (SGAEERARQRRDELH) the composition is skewed to basic and acidic residues.

It belongs to the SMC family. MukB subfamily. Homodimerization via its hinge domain. Binds to DNA via its C-terminal region. Interacts, and probably forms a ternary complex, with MukE and MukF via its C-terminal region. The complex formation is stimulated by calcium or magnesium. Interacts with tubulin-related protein FtsZ.

Its subcellular location is the cytoplasm. The protein resides in the nucleoid. Functionally, plays a central role in chromosome condensation, segregation and cell cycle progression. Functions as a homodimer, which is essential for chromosome partition. Involved in negative DNA supercoiling in vivo, and by this means organize and compact chromosomes. May achieve or facilitate chromosome segregation by condensation DNA from both sides of a centrally located replisome during cell division. This Salmonella enteritidis PT4 (strain P125109) protein is Chromosome partition protein MukB.